We begin with the raw amino-acid sequence, 474 residues long: Protein anachronism (474 aa).

Residues 1-33 (MASAMRGEKCERSRIRELVLILSLITMAGDSRA) form the signal peptide. Residues Asn-54, Asn-62, Asn-73, Asn-116, and Asn-144 are each glycosylated (N-linked (GlcNAc...) asparagine). The segment at 173-195 (NPGQTREHNPGQASTQPISTENP) is disordered. A compositionally biased stretch (polar residues) spans 183–195 (GQASTQPISTENP). The N-linked (GlcNAc...) asparagine glycan is linked to Asn-342. Positions 359–372 (FIESTTSNSPTIDN) are enriched in polar residues. The segment at 359-474 (FIESTTSNSP…HHRIPAHKQE (116 aa)) is disordered. Composition is skewed to basic residues over residues 390-400 (LVHHRRHHHNH) and 437-474 (NHHRHRTGHHHPHHQLHQHHHHHHRHTKHHRIPAHKQE).

As to expression, synthesized in some glial cells and secreted.

It localises to the secreted. Its function is as follows. Negatively regulates proliferation of neuronal precursor cells, thereby controlling the timing of postembryonic neurogenesis. This Drosophila melanogaster (Fruit fly) protein is Protein anachronism (ana).